Here is a 193-residue protein sequence, read N- to C-terminus: Large ribosomal subunit protein uL5 (193 aa).

The protein belongs to the universal ribosomal protein uL5 family. Part of the 50S ribosomal subunit; part of the 5S rRNA/L5/L18/L25 subcomplex. Contacts the 5S rRNA and the P site tRNA. Forms a bridge to the 30S subunit in the 70S ribosome.

This is one of the proteins that bind and probably mediate the attachment of the 5S RNA into the large ribosomal subunit, where it forms part of the central protuberance. In the 70S ribosome it contacts protein S13 of the 30S subunit (bridge B1b), connecting the 2 subunits; this bridge is implicated in subunit movement. Contacts the P site tRNA; the 5S rRNA and some of its associated proteins might help stabilize positioning of ribosome-bound tRNAs. This Novosphingobium aromaticivorans (strain ATCC 700278 / DSM 12444 / CCUG 56034 / CIP 105152 / NBRC 16084 / F199) protein is Large ribosomal subunit protein uL5.